The chain runs to 151 residues: Putative pre-16S rRNA nuclease (151 aa).

Belongs to the YqgF nuclease family.

It is found in the cytoplasm. Functionally, could be a nuclease involved in processing of the 5'-end of pre-16S rRNA. This chain is Putative pre-16S rRNA nuclease, found in Methylococcus capsulatus (strain ATCC 33009 / NCIMB 11132 / Bath).